A 304-amino-acid polypeptide reads, in one-letter code: HTH-type transcriptional regulator AdmX (304 aa).

Positions 1–58 constitute an HTH lysR-type domain; it reads MKLRHLEIFYTVMTCGSLSRAAESLNISQPAASKSLKNAELKLGFKLFQRVRGKLLPS. A DNA-binding region (H-T-H motif) is located at residues 18–37; sequence LSRAAESLNISQPAASKSLK.

This sequence belongs to the LysR transcriptional regulatory family.

The protein localises to the cytoplasm. With respect to regulation, admX-mediated transcription is inhibited by indole-3-acetic and indole-3-pyruvic acids. AdmX recognizes and binds the auxin indole-3-acetic acid (IAA), which causes conformational changes in AdmX that result in the inhibition of the expression of the andrimid gene cluster and the suppression of antibiotic production. It also recognizes indole-3-pyruvic acid (IPA), an intermediate of the main IAA biosynthetic pathway in plants and plant beneficial bacteria, which also prevents andrimid synthesis, but to a much lesser extent. Its function is as follows. Positively regulates the biosynthesis of andrimid, a broad-spectrum antibiotic, by activating the expression of the adm biosynthetic gene cluster. It specifically binds to a region within the adm promoter. This chain is HTH-type transcriptional regulator AdmX, found in Serratia plymuthica.